The chain runs to 155 residues: Ribosomal RNA large subunit methyltransferase H (155 aa).

Residues Leu-73, Gly-104, and 123 to 128 each bind S-adenosyl-L-methionine; that span reads LSPLTL.

Belongs to the RNA methyltransferase RlmH family. Homodimer.

Its subcellular location is the cytoplasm. It carries out the reaction pseudouridine(1915) in 23S rRNA + S-adenosyl-L-methionine = N(3)-methylpseudouridine(1915) in 23S rRNA + S-adenosyl-L-homocysteine + H(+). Functionally, specifically methylates the pseudouridine at position 1915 (m3Psi1915) in 23S rRNA. The protein is Ribosomal RNA large subunit methyltransferase H of Stutzerimonas stutzeri (strain A1501) (Pseudomonas stutzeri).